The primary structure comprises 395 residues: Acid ceramidase (395 aa).

Residues 1–20 form the signal peptide; sequence MLGWSRLTFILLSGIVTCLV. Residues C31 and C340 are joined by a disulfide bond. Catalysis depends on C143, which acts as the Nucleophile. N-linked (GlcNAc...) asparagine glycans are attached at residues N195, N259, N286, and N342. A disulfide bridge connects residues C388 and C392.

The protein belongs to the acid ceramidase family. Heterodimer; disulfide-linked. The heterodimer is composed of the disulfide-linked alpha and beta chains produced by autocatalytic cleavage of the precursor. Post-translationally, N-glycosylated. In terms of processing, proteolytically cleaved into two chains alpha and beta that remain associated via a disulfide bond. Cleavage gives rise to a conformation change that activates the enzyme. The same catalytic Cys residue mediates the autoproteolytic cleavage and subsequent hydrolysis of lipid substrates. The beta chain may undergo an additional C-terminal processing.

Its subcellular location is the lysosome. It localises to the secreted. It carries out the reaction an N-acylsphing-4-enine + H2O = sphing-4-enine + a fatty acid. The catalysed reaction is N-dodecanoylsphing-4-enine + H2O = dodecanoate + sphing-4-enine. The enzyme catalyses N-tetradecanoylsphing-4-enine + H2O = tetradecanoate + sphing-4-enine. It catalyses the reaction N-hexadecanoylsphing-4-enine + H2O = sphing-4-enine + hexadecanoate. It carries out the reaction N-octadecanoylsphing-4-enine + H2O = sphing-4-enine + octadecanoate. The catalysed reaction is N-dodecanoyl-(4R)-hydroxysphinganine + H2O = (4R)-hydroxysphinganine + dodecanoate. The enzyme catalyses N-(dodecanoyl)-sphinganine + H2O = dodecanoate + sphinganine. It catalyses the reaction N-(acetyl)-sphing-4-enine + H2O = sphing-4-enine + acetate. It carries out the reaction N-(hexanoyl)sphing-4-enine + H2O = hexanoate + sphing-4-enine. The catalysed reaction is N-octanoylsphing-4-enine + H2O = octanoate + sphing-4-enine. The enzyme catalyses N-(9Z-octadecenoyl)-sphing-4-enine + H2O = sphing-4-enine + (9Z)-octadecenoate. It catalyses the reaction N-dodecanoylethanolamine + H2O = dodecanoate + ethanolamine. The protein operates within lipid metabolism; sphingolipid metabolism. Its function is as follows. Lysosomal ceramidase that hydrolyzes sphingolipid ceramides into sphingosine and free fatty acids at acidic pH. Ceramides, sphingosine, and its phosphorylated form sphingosine-1-phosphate are bioactive lipids that mediate cellular signaling pathways regulating several biological processes including cell proliferation, apoptosis and differentiation. Has a higher catalytic efficiency towards C12-ceramides versus other ceramides. Also catalyzes the reverse reaction allowing the synthesis of ceramides from fatty acids and sphingosine. For the reverse synthetic reaction, the natural sphingosine D-erythro isomer is more efficiently utilized as a substrate compared to D-erythro-dihydrosphingosine and D-erythro-phytosphingosine, while the fatty acids with chain lengths of 12 or 14 carbons are the most efficiently used. Also has an N-acylethanolamine hydrolase activity. By regulating the levels of ceramides, sphingosine and sphingosine-1-phosphate in the epidermis, mediates the calcium-induced differentiation of epidermal keratinocytes. Also indirectly regulates tumor necrosis factor/TNF-induced apoptosis. By regulating the intracellular balance between ceramides and sphingosine, in adrenocortical cells, probably also acts as a regulator of steroidogenesis. The sequence is that of Acid ceramidase from Bos taurus (Bovine).